The chain runs to 759 residues: NADP-dependent malic enzyme (759 aa).

The segment at 1 to 428 (MDDQLKQSAL…KLTEFVYKTN (428 aa)) is malic enzyme. Catalysis depends on tyrosine 39, which acts as the Proton donor. An N6-acetyllysine modification is found at lysine 56. Lysine 94 acts as the Proton acceptor in catalysis. Residues glutamate 136, aspartate 137, and aspartate 162 each contribute to the a divalent metal cation site. Residues 195–198 (AGAA), asparagine 288, and asparagine 320 each bind NADP(+). The interval 429-759 (LFMKPIFSQA…AVVEAQTQPL (331 aa)) is phosphate acetyltransferase; required for oligomerization, inhibition by acetyl-CoA and activation by glutamate, aspartate, and glucose-6-phosphate.

In the N-terminal section; belongs to the malic enzymes family. This sequence in the C-terminal section; belongs to the phosphate acetyltransferase and butyryltransferase family. As to quaternary structure, homooligomer, possibly an octamer. Requires Mg(2+) as cofactor. It depends on Mn(2+) as a cofactor.

It catalyses the reaction (S)-malate + NADP(+) = pyruvate + CO2 + NADPH. The catalysed reaction is oxaloacetate + H(+) = pyruvate + CO2. Inhibited by 4 mM Mg(2+) and acetyl-CoA, competitively inhibited by fumarate and oxaloacetate. Activated by glutamate and aspartate, glucose-6-phosphate, acetyl-phosphate and 2 mM KCl. Its function is as follows. Catalyzes the decarboxylation of malate to pyruvate. In vitro, shows malolactic enzyme activity in the presence of NADPH. However, it is unlikely that this activity is of relevance in E.coli, which produces little NADPH. This chain is NADP-dependent malic enzyme (maeB), found in Escherichia coli (strain K12).